A 473-amino-acid chain; its full sequence is Calcium/calmodulin-dependent protein kinase type IV (473 aa).

A phosphoserine; by autocatalysis mark is found at S12 and S13. Positions 46–300 (FEVESELGRG…TFQALQHPWV (255 aa)) constitute a Protein kinase domain. Residues 52–60 (LGRGATSIV) and K75 contribute to the ATP site. T57 carries O-linked (GlcNAc) threonine glycosylation. S58 is a glycosylation site (O-linked (GlcNAc) serine). O-linked (GlcNAc) serine glycosylation occurs at S137. The active-site Proton acceptor is D164. An O-linked (GlcNAc) serine glycan is attached at S189. T200 carries the post-translational modification Phosphothreonine; by CaMKK1 and CaMKK2. Residues 305–321 (ANFVHMDTAQKKLQEFN) form an autoinhibitory domain region. The PP2A-binding stretch occupies residues 306-323 (NFVHMDTAQKKLQEFNAR). Positions 322–341 (ARRKLKAAVKAVVASSRLGS) are calmodulin-binding. S336 carries the post-translational modification Phosphoserine; by autocatalysis. A Phosphoserine modification is found at S341. The span at 341–350 (SASSSHGSIQ) shows a compositional bias: low complexity. Disordered regions lie at residues 341 to 368 (SASSSHGSIQESHKASRDPSPIQDGNED) and 445 to 473 (EEAAAPREGQGSSAVGFEVPQQDVILPEY). O-linked (GlcNAc) serine glycans are attached at residues S344, S345, and S356. S360 is subject to Phosphoserine.

The protein belongs to the protein kinase superfamily. CAMK Ser/Thr protein kinase family. CaMK subfamily. In terms of assembly, monomer. Interacts with protein phosphatase 2A (PPP2CA/PPP2CB); the interaction is mutually exclusive with binding to Ca(2+)/calmodulin. Phosphorylated by CaMKK1 and CaMKK2 on Thr-200. Dephosphorylated by protein phosphatase 2A. Autophosphorylated on Ser-12 and Ser-13. Post-translationally, glycosylation at Ser-189 modulates the phosphorylation of CaMK4 at Thr-200 and negatively regulates its activity toward CREB1 in basal conditions and during early inomycin stimulation. As to expression, expressed in brain, thymus, CD4 T-cells, testis and epithelial ovarian cancer tissue.

The protein localises to the cytoplasm. It is found in the nucleus. The enzyme catalyses L-seryl-[protein] + ATP = O-phospho-L-seryl-[protein] + ADP + H(+). It catalyses the reaction L-threonyl-[protein] + ATP = O-phospho-L-threonyl-[protein] + ADP + H(+). Its activity is regulated as follows. Activated by Ca(2+)/calmodulin. Binding of calmodulin results in conformational change that relieves intrasteric autoinhibition and allows phosphorylation of Thr-200 within the activation loop by CaMKK1 or CaMKK2. Phosphorylation of Thr-200 results in a 10-20-fold increase in total activity to generate Ca(2+)/calmodulin-independent activity. Autophosphorylation of the N-terminus Ser-12 and Ser-13 is required for full activation. Inactivated by protein phosphatase 2A (PPP2CA/PPP2CB) which dephosphorylates Thr-200, thereby terminating autonomous activity and helping to maintain the enzyme in its autoinhibited state. Calcium/calmodulin-dependent protein kinase that operates in the calcium-triggered CaMKK-CaMK4 signaling cascade and regulates, mainly by phosphorylation, the activity of several transcription activators, such as CREB1, MEF2D, JUN and RORA, which play pivotal roles in immune response, inflammation, and memory consolidation. In the thymus, regulates the CD4(+)/CD8(+) double positive thymocytes selection threshold during T-cell ontogeny. In CD4 memory T-cells, is required to link T-cell antigen receptor (TCR) signaling to the production of IL2, IFNG and IL4 (through the regulation of CREB and MEF2). Regulates the differentiation and survival phases of osteoclasts and dendritic cells (DCs). Mediates DCs survival by linking TLR4 and the regulation of temporal expression of BCL2. Phosphorylates the transcription activator CREB1 on 'Ser-133' in hippocampal neuron nuclei and contribute to memory consolidation and long term potentiation (LTP) in the hippocampus. Can activate the MAP kinases MAPK1/ERK2, MAPK8/JNK1 and MAPK14/p38 and stimulate transcription through the phosphorylation of ELK1 and ATF2. Can also phosphorylate in vitro CREBBP, PRM2, MEF2A and STMN1/OP18. In Homo sapiens (Human), this protein is Calcium/calmodulin-dependent protein kinase type IV (CAMK4).